A 132-amino-acid chain; its full sequence is Large ribosomal subunit protein bL17 (132 aa).

Belongs to the bacterial ribosomal protein bL17 family. Part of the 50S ribosomal subunit. Contacts protein L32.

This chain is Large ribosomal subunit protein bL17, found in Leptothrix cholodnii (strain ATCC 51168 / LMG 8142 / SP-6) (Leptothrix discophora (strain SP-6)).